Reading from the N-terminus, the 248-residue chain is MAGHSQFKNIMHRKGRQDAVRSKIFSKLAREITVAAKQGAPDPAMNPRLRLAVQNAKAQSMPKDNIERAIKKASGTDVENYDEVRYEGYGPGGVAVIVEALTDNRNRTASNVRAAFTKSGGALGETGSVSFMFNRIGEIIYKPEAGTADHIMDAAIEAGAEDVQSEESGHHITCAFEDIGEVSKTLESKLGEAESIKTIWKATTLAPIDEEKALSVLRLISTLEEDDDVQNVYANFDVSDEILAKLSV.

This sequence belongs to the TACO1 family.

It localises to the cytoplasm. The protein is Probable transcriptional regulatory protein BT_2363 of Bartonella tribocorum (strain CIP 105476 / IBS 506).